The sequence spans 844 residues: E3 ubiquitin-protein ligase BRE1-like 2 (844 aa).

Coiled coils occupy residues 1-38 and 160-240; these read MDAAALQYENQKLVQQLEAQKSKMRALEGKFKELRDEQ and EDVI…QLQT. Residues 244-269 form a disordered region; it reads SLMNTSAPNGVNGSVSTDKSSDKGMG. Polar residues predominate over residues 245–261; sequence LMNTSAPNGVNGSVSTD. Coiled-coil stretches lie at residues 290–604 and 640–670; these read ELHE…SEIE and KMKQAYGSLLAEKNMLQKQLQHVNSSLESSK. An RING-type zinc finger spans residues 792 to 831; it reads CGVCFDRPKEVVITKCFHLFCSPCIQRNLEIRHRKCPGCG.

Belongs to the BRE1 family.

Its subcellular location is the nucleus. It carries out the reaction S-ubiquitinyl-[E2 ubiquitin-conjugating enzyme]-L-cysteine + [acceptor protein]-L-lysine = [E2 ubiquitin-conjugating enzyme]-L-cysteine + N(6)-ubiquitinyl-[acceptor protein]-L-lysine.. Its pathway is protein modification; protein ubiquitination. Its function is as follows. E3 ubiquitin-protein ligase that monoubiquitinates H2B to form H2BK143ub1. H2BK143ub1 gives a specific tag for epigenetic transcriptional activation and is also prerequisite for H3K4me and maybe H3K79me. It thereby plays a central role in histone code and gene regulation. Forms a ubiquitin ligase complex in cooperation with the E2 enzyme UBC2/RAD6. The chain is E3 ubiquitin-protein ligase BRE1-like 2 (BRE1B) from Oryza sativa subsp. indica (Rice).